A 992-amino-acid chain; its full sequence is Aminopeptidase Q (992 aa).

Residues 2–13 (GPPSSSGFYVSR) lie on the Cytoplasmic side of the membrane. The helical; Signal-anchor for type II membrane protein transmembrane segment at 14–34 (AVALLLAALAAALLLALAVLA) threads the bilayer. Topologically, residues 35–992 (ALYGRCARVQ…RMTAWLRKNT (958 aa)) are extracellular. The disordered stretch occupies residues 48–92 (LHHGGVPDAASSPRGTQEEQLPTWPPRPTREPAGTATPGHWRPPG). Residue Asn-133 is glycosylated (N-linked (GlcNAc...) asparagine). Glu-241 is a substrate binding site. N-linked (GlcNAc...) asparagine glycosylation is found at Asn-262, Asn-289, Asn-347, and Asn-361. Residue 380 to 384 (SAMEN) coordinates substrate. His-416 contributes to the Zn(2+) binding site. Glu-417 (proton acceptor) is an active-site residue. Zn(2+)-binding residues include His-420 and Glu-439. Asn-489 is a glycosylation site (N-linked (GlcNAc...) asparagine). Tyr-505 serves as the catalytic Proton donor. Asn-584, Asn-602, Asn-609, Asn-655, Asn-811, Asn-850, and Asn-889 each carry an N-linked (GlcNAc...) asparagine glycan.

The protein belongs to the peptidase M1 family. It depends on Zn(2+) as a cofactor. In terms of tissue distribution, expressed in skin. Expression levels do not differ between dark and light skin areas.

Its subcellular location is the membrane. In terms of biological role, metalloprotease which may be important for placentation by regulating biological activity of key peptides at the embryo-maternal interface. Involved in coat pigmentation patterns. During skin development, may be required to establish the periodicity of tabby markings, initiating a pre-pattern at or before hair follicle development. The chain is Aminopeptidase Q (LVRN) from Acinonyx jubatus (Cheetah).